A 252-amino-acid chain; its full sequence is Triosephosphate isomerase (252 aa).

10 to 12 (NWK) is a substrate binding site. Histidine 96 functions as the Electrophile in the catalytic mechanism. Glutamate 168 functions as the Proton acceptor in the catalytic mechanism. Substrate is bound by residues glycine 174, serine 214, and 235–236 (GG).

It belongs to the triosephosphate isomerase family. As to quaternary structure, homodimer.

It is found in the cytoplasm. The enzyme catalyses D-glyceraldehyde 3-phosphate = dihydroxyacetone phosphate. The protein operates within carbohydrate biosynthesis; gluconeogenesis. It participates in carbohydrate degradation; glycolysis; D-glyceraldehyde 3-phosphate from glycerone phosphate: step 1/1. Its function is as follows. Involved in the gluconeogenesis. Catalyzes stereospecifically the conversion of dihydroxyacetone phosphate (DHAP) to D-glyceraldehyde-3-phosphate (G3P). In Streptococcus equi subsp. zooepidemicus (strain MGCS10565), this protein is Triosephosphate isomerase.